Reading from the N-terminus, the 492-residue chain is ATP synthase subunit beta, chloroplastic (492 aa).

170–177 (GGAGVGKT) serves as a coordination point for ATP.

This sequence belongs to the ATPase alpha/beta chains family. In terms of assembly, F-type ATPases have 2 components, CF(1) - the catalytic core - and CF(0) - the membrane proton channel. CF(1) has five subunits: alpha(3), beta(3), gamma(1), delta(1), epsilon(1). CF(0) has four main subunits: a(1), b(1), b'(1) and c(9-12).

It is found in the plastid. It localises to the chloroplast thylakoid membrane. It carries out the reaction ATP + H2O + 4 H(+)(in) = ADP + phosphate + 5 H(+)(out). Functionally, produces ATP from ADP in the presence of a proton gradient across the membrane. The catalytic sites are hosted primarily by the beta subunits. This chain is ATP synthase subunit beta, chloroplastic, found in Anthoceros angustus (Hornwort).